A 623-amino-acid chain; its full sequence is Phosphoglucomutase, chloroplastic (623 aa).

The N-terminal 63 residues, 1–63 (MTSTYTRFDT…SSSSSSVVAG (63 aa)), are a transit peptide targeting the chloroplast. Residues Arg88 and Ser181 each coordinate alpha-D-glucose 1,6-bisphosphate. The active-site Phosphoserine intermediate is the Ser181. The Mg(2+) site is built by Ser181, Asp346, Asp348, and Asp350. At Ser181 the chain carries Phosphoserine. Positions 350, 351, 414, 433, 435, and 446 each coordinate alpha-D-glucose 1,6-bisphosphate.

The protein belongs to the phosphohexose mutase family. As to quaternary structure, monomer. It depends on Mg(2+) as a cofactor. Expressed in flowers, siliques and germinating seeds.

The protein localises to the plastid. The protein resides in the chloroplast. The enzyme catalyses alpha-D-glucose 1-phosphate = alpha-D-glucose 6-phosphate. It carries out the reaction O-phospho-L-seryl-[protein] + alpha-D-glucose 1-phosphate = alpha-D-glucose 1,6-bisphosphate + L-seryl-[protein]. It catalyses the reaction alpha-D-glucose 1,6-bisphosphate + L-seryl-[protein] = O-phospho-L-seryl-[protein] + alpha-D-glucose 6-phosphate. Its activity is regulated as follows. Inhibited by the Calvin cycle intermediates fructose-1,6-bisphosphate and ribulose-1,5-bisphosphate. Catalyzes the reversible isomerization of alpha-D-glucose 1-phosphate to alpha-D-glucose 6-phosphate. The mechanism proceeds via the intermediate compound alpha-D-glucose 1,6-bisphosphate. This enzyme participates in both the breakdown and synthesis of glucose. Factor that affects seed oil content. Accumulated starch in young embryos may play an important role in providing carbon resources for seed storage lipid biosynthesis in oilseed plants. Promotes gravitropic responses, negative in shoots but positive in roots, by facilitating starch granules (statoliths) formation in hypocotyls and roots columella. This is Phosphoglucomutase, chloroplastic from Arabidopsis thaliana (Mouse-ear cress).